The chain runs to 478 residues: Subtilisin-like protease 3 (478 aa).

The signal sequence occupies residues 1 to 17 (MKFSTILPILWANCCLC). An Inhibitor I9 domain is found at 70–167 (RYVIVFNEDI…FVEQETTVKI (98 aa)). Residues 177 to 478 (PWGLHRVSHR…GGGKKLDGFW (302 aa)) form the Peptidase S8 domain. Active-site charge relay system residues include Asp-213, His-245, and Ser-407.

This sequence belongs to the peptidase S8 family.

Serine protease with unknown substrate. The polypeptide is Subtilisin-like protease 3 (YSP3) (Saccharomyces cerevisiae (strain ATCC 204508 / S288c) (Baker's yeast)).